Consider the following 232-residue polypeptide: Large ribosomal subunit protein uL1 (232 aa).

Belongs to the universal ribosomal protein uL1 family. Part of the 50S ribosomal subunit.

Its function is as follows. Binds directly to 23S rRNA. The L1 stalk is quite mobile in the ribosome, and is involved in E site tRNA release. Functionally, protein L1 is also a translational repressor protein, it controls the translation of the L11 operon by binding to its mRNA. The polypeptide is Large ribosomal subunit protein uL1 (Levilactobacillus brevis (strain ATCC 367 / BCRC 12310 / CIP 105137 / JCM 1170 / LMG 11437 / NCIMB 947 / NCTC 947) (Lactobacillus brevis)).